A 376-amino-acid chain; its full sequence is Serpin B9 (376 aa).

Position 1 is an N-acetylmethionine (Met-1).

It belongs to the serpin family. Ov-serpin subfamily.

It is found in the cytoplasm. In terms of biological role, granzyme B inhibitor. In Homo sapiens (Human), this protein is Serpin B9 (SERPINB9).